A 182-amino-acid chain; its full sequence is Ribosome hibernation promotion factor (182 aa).

It belongs to the HPF/YfiA ribosome-associated protein family. Long HPF subfamily. In terms of assembly, interacts with 100S ribosomes.

The protein localises to the cytoplasm. Functionally, required for dimerization of active 70S ribosomes into 100S ribosomes in stationary phase; 100S ribosomes are translationally inactive and sometimes present during exponential growth. The polypeptide is Ribosome hibernation promotion factor (Streptococcus pyogenes serotype M6 (strain ATCC BAA-946 / MGAS10394)).